The sequence spans 1041 residues: Putative transcription elongation factor SPT5 homolog 1 (1041 aa).

The disordered stretch occupies residues Met-1–Arg-133. Composition is skewed to acidic residues over residues Glu-7–Glu-32, Asp-53–Tyr-69, and Asp-99–Ile-114. Position 59 is a phosphoserine (Ser-59). A compositionally biased stretch (basic and acidic residues) spans Pro-122–Arg-133. KOW domains are found at residues Asp-273–Val-300, His-425–Glu-452, Tyr-477–His-504, and Val-601–Gly-628. Disordered regions lie at residues Asn-662–Ser-713 and Asp-768–Leu-921. A compositionally biased stretch (gly residues) spans Gly-691 to His-703. The KOW 5 domain occupies Asp-712–Asn-739. A compositionally biased stretch (basic and acidic residues) spans Asp-804–Ala-814. 2 stretches are compositionally biased toward polar residues: residues Ser-835–Pro-844 and Thr-893–Ser-904. In terms of domain architecture, KOW 6 spans Pro-988–Ser-1015.

Belongs to the SPT5 family.

The protein resides in the nucleus. Its function is as follows. May regulate transcription elongation by RNA polymerase II. May enhance transcriptional pausing at sites proximal to the promoter, which may in turn facilitate the assembly of an elongation competent RNA polymerase II complex. This chain is Putative transcription elongation factor SPT5 homolog 1, found in Arabidopsis thaliana (Mouse-ear cress).